Reading from the N-terminus, the 55-residue chain is Spermatid nuclear transition protein 1 (55 aa).

Residues 1–42 (MSTSRKLKSQGTRRGKNRTPHKGVKRGCSKRKYRKSSLKSRK) show a composition bias toward basic residues. A disordered region spans residues 1–55 (MSTSRKLKSQGTRRGKNRTPHKGVKRGCSKRKYRKSSLKSRKRCDDANRNFRSHL). A phosphoserine mark is found at Ser-9, Ser-36, Ser-37, and Ser-40.

It belongs to the nuclear transition protein 1 family. As to expression, testis.

It localises to the nucleus. It is found in the chromosome. Its function is as follows. Plays a key role in the replacement of histones to protamine in the elongating spermatids of mammals. In condensing spermatids, loaded onto the nucleosomes, where it promotes the recruitment and processing of protamines, which are responsible for histone eviction. This Ovis aries (Sheep) protein is Spermatid nuclear transition protein 1 (TNP1).